The primary structure comprises 236 residues: Leucyl/phenylalanyl-tRNA--protein transferase (236 aa).

Belongs to the L/F-transferase family.

The protein resides in the cytoplasm. The catalysed reaction is N-terminal L-lysyl-[protein] + L-leucyl-tRNA(Leu) = N-terminal L-leucyl-L-lysyl-[protein] + tRNA(Leu) + H(+). It catalyses the reaction N-terminal L-arginyl-[protein] + L-leucyl-tRNA(Leu) = N-terminal L-leucyl-L-arginyl-[protein] + tRNA(Leu) + H(+). It carries out the reaction L-phenylalanyl-tRNA(Phe) + an N-terminal L-alpha-aminoacyl-[protein] = an N-terminal L-phenylalanyl-L-alpha-aminoacyl-[protein] + tRNA(Phe). Functionally, functions in the N-end rule pathway of protein degradation where it conjugates Leu, Phe and, less efficiently, Met from aminoacyl-tRNAs to the N-termini of proteins containing an N-terminal arginine or lysine. This Vibrio parahaemolyticus serotype O3:K6 (strain RIMD 2210633) protein is Leucyl/phenylalanyl-tRNA--protein transferase.